Consider the following 242-residue polypeptide: RNA polymerase sigma factor for flagellar operon (242 aa).

The Polymerase core binding signature appears at Asp-55–Gly-68. The segment at residues Leu-211 to Lys-230 is a DNA-binding region (H-T-H motif).

This sequence belongs to the sigma-70 factor family.

Its function is as follows. Sigma factors are initiation factors that promote the attachment of RNA polymerase to specific initiation sites and are then released. This alternative sigma factor is specific for the flagellin gene (fliC) expression. This is RNA polymerase sigma factor for flagellar operon (lafS) from Vibrio parahaemolyticus serotype O3:K6 (strain RIMD 2210633).